The chain runs to 299 residues: Transcription elongation factor A protein 2 (299 aa).

The TFIIS N-terminal domain maps to 5 to 82 (EEIARIARRL…KSWKKLLDVS (78 aa)). K57 is covalently cross-linked (Glycyl lysine isopeptide (Lys-Gly) (interchain with G-Cter in ubiquitin)). 2 positions are modified to phosphoserine: S59 and S100. The segment at 83 to 126 (DGKSRDQGRGTPLPTSSSKDASGTTDLSCKKPDPPRTSSTPRIT) is disordered. A compositionally biased stretch (polar residues) spans 95 to 109 (LPTSSSKDASGTTDL). Positions 138-254 (VRNKCREMLT…EHQMARTGGT (117 aa)) constitute a TFIIS central domain. The TFIIS-type zinc finger occupies 257-297 (DLFTCNKCRKKNCTYTQVQTRSSDEPMTTYVVCNECGNRWK). The Zn(2+) site is built by C261, C264, C289, and C292.

It belongs to the TFS-II family. Interacts with the basal transcription factor GTF2B. Interacts with REXO1. As to expression, testis specific.

The protein localises to the nucleus. Its function is as follows. Necessary for efficient RNA polymerase II transcription elongation past template-encoded arresting sites. The arresting sites in DNA have the property of trapping a certain fraction of elongating RNA polymerases that pass through, resulting in locked ternary complexes. Cleavage of the nascent transcript by S-II allows the resumption of elongation from the new 3'-terminus. This chain is Transcription elongation factor A protein 2 (Tcea2), found in Rattus norvegicus (Rat).